The chain runs to 253 residues: Small ribosomal subunit protein uS2 (253 aa).

It belongs to the universal ribosomal protein uS2 family.

This is Small ribosomal subunit protein uS2 from Hahella chejuensis (strain KCTC 2396).